Here is a 601-residue protein sequence, read N- to C-terminus: Elongation factor 4 (601 aa).

The tr-type G domain maps to 5-187; it reads DKIRNFSIIA…SIVKDLPAPQ (183 aa). GTP contacts are provided by residues 17 to 22 and 134 to 137; these read DHGKST and NKVD.

This sequence belongs to the TRAFAC class translation factor GTPase superfamily. Classic translation factor GTPase family. LepA subfamily.

It localises to the cell inner membrane. The catalysed reaction is GTP + H2O = GDP + phosphate + H(+). In terms of biological role, required for accurate and efficient protein synthesis under certain stress conditions. May act as a fidelity factor of the translation reaction, by catalyzing a one-codon backward translocation of tRNAs on improperly translocated ribosomes. Back-translocation proceeds from a post-translocation (POST) complex to a pre-translocation (PRE) complex, thus giving elongation factor G a second chance to translocate the tRNAs correctly. Binds to ribosomes in a GTP-dependent manner. In Maridesulfovibrio salexigens (strain ATCC 14822 / DSM 2638 / NCIMB 8403 / VKM B-1763) (Desulfovibrio salexigens), this protein is Elongation factor 4.